Consider the following 493-residue polypeptide: MSSLKEQKELFVSNLLGGSISETYNVTAVALSAYLSYNLISSYLDYKITFPVDFILNCMTILLSITLYSNSTNTLHLLILVPGILAAIVGRWGQKDVKKSRSKKPRDAKGTKTEKQLLVKKPFITAYRSHMLVITNFAILAVDFRMFPRRFAKVETWGTSLMDLGVGSFVFSMGLASSRAIIKQRFDSSKSTDYRFKLSQYVSLIMKNSIKTLPVLALGLIRLVSVKTLEYQEHVTEYGVHWNFFITLGLLPIFFGIIDPVLNFVPRFVVALVICIGYEVLMVKTDLLSFILRSDNRMESLVTMNKEGIFSFIGYFSIFIFGQSFGSFVLTGFKTPNNLFRMCSYQQYKKAGAKSGLFTVTSTQGLLIATLFSQALFWYVQEAYFVSSISRRLANLSYVLWVVSYNSTLLLGYNLIESVVAKPEAADSKILNAFNNNGLLSFLLGNLLTGLTNMTINTLGCNAPVTFAILVTYGLVLSIIAVTLDRYGIYIKL.

10 helical membrane-spanning segments follow: residues 15-35 (LLGG…SAYL), 48-68 (ITFP…ITLY), 70-90 (NSTN…AIVG), 122-142 (PFIT…ILAV), 156-176 (TWGT…MGLA), 201-221 (YVSL…LGLI), 244-264 (FFIT…VLNF), 268-288 (FVVA…TDLL), 309-329 (IFSF…GSFV), and 366-386 (LLIA…AYFV). N395 is a glycosylation site (N-linked (GlcNAc...) asparagine). Transmembrane regions (helical) follow at residues 396–416 (LSYV…YNLI), 439–459 (LLSF…INTL), and 464–484 (PVTF…AVTL).

Belongs to the PIGW family.

The protein localises to the endoplasmic reticulum membrane. It participates in glycolipid biosynthesis; glycosylphosphatidylinositol-anchor biosynthesis. Its function is as follows. Probable acetyltransferase, which acetylates the inositol ring of phosphatidylinositol during biosynthesis of GPI-anchor. This Debaryomyces hansenii (strain ATCC 36239 / CBS 767 / BCRC 21394 / JCM 1990 / NBRC 0083 / IGC 2968) (Yeast) protein is GPI-anchored wall transfer protein 1 (GWT1).